Consider the following 597-residue polypeptide: Aspartate--tRNA(Asp/Asn) ligase (597 aa).

Residue E176 coordinates L-aspartate. The interval 200–203 is aspartate; the sequence is QQFK. 2 residues coordinate L-aspartate: R222 and H451. An ATP-binding site is contributed by 222–224; it reads RDE. E489 contributes to the ATP binding site. R496 is a binding site for L-aspartate. 541–544 contributes to the ATP binding site; sequence GIDR.

It belongs to the class-II aminoacyl-tRNA synthetase family. Type 1 subfamily. As to quaternary structure, homodimer.

The protein localises to the cytoplasm. It carries out the reaction tRNA(Asx) + L-aspartate + ATP = L-aspartyl-tRNA(Asx) + AMP + diphosphate. Its function is as follows. Aspartyl-tRNA synthetase with relaxed tRNA specificity since it is able to aspartylate not only its cognate tRNA(Asp) but also tRNA(Asn). Reaction proceeds in two steps: L-aspartate is first activated by ATP to form Asp-AMP and then transferred to the acceptor end of tRNA(Asp/Asn). This chain is Aspartate--tRNA(Asp/Asn) ligase, found in Orientia tsutsugamushi (strain Boryong) (Rickettsia tsutsugamushi).